The following is a 324-amino-acid chain: uncharacterized protein (324 aa).

This is an uncharacterized protein from Saccharomyces cerevisiae (strain ATCC 204508 / S288c) (Baker's yeast).